The following is a 399-amino-acid chain: Argininosuccinate synthase (399 aa).

Residues 10–18 and Ala-38 contribute to the ATP site; that span reads AYSGGVDTS. Tyr-89 lines the L-citrulline pocket. Gly-119 provides a ligand contact to ATP. Residues Thr-121, Asn-125, and Asp-126 each contribute to the L-aspartate site. Asn-125 is a binding site for L-citrulline. Positions 129, 177, 186, 262, and 274 each coordinate L-citrulline.

This sequence belongs to the argininosuccinate synthase family. Type 1 subfamily. As to quaternary structure, homotetramer.

The protein resides in the cytoplasm. It carries out the reaction L-citrulline + L-aspartate + ATP = 2-(N(omega)-L-arginino)succinate + AMP + diphosphate + H(+). It functions in the pathway amino-acid biosynthesis; L-arginine biosynthesis; L-arginine from L-ornithine and carbamoyl phosphate: step 2/3. The chain is Argininosuccinate synthase from Rippkaea orientalis (strain PCC 8801 / RF-1) (Cyanothece sp. (strain PCC 8801)).